The chain runs to 154 residues: Myoglobin (154 aa).

The region spanning 2 to 148 (GLSDGEWQIV…FRNDIAAKYK (147 aa)) is the Globin domain. At Ser-4 the chain carries Phosphoserine. Position 65 (His-65) interacts with nitrite. An O2-binding site is contributed by His-65. Phosphothreonine is present on Thr-68. His-94 contributes to the heme b binding site.

It belongs to the globin family. In terms of assembly, monomeric.

Its subcellular location is the cytoplasm. It is found in the sarcoplasm. The enzyme catalyses Fe(III)-heme b-[protein] + nitric oxide + H2O = Fe(II)-heme b-[protein] + nitrite + 2 H(+). The catalysed reaction is H2O2 + AH2 = A + 2 H2O. Its function is as follows. Monomeric heme protein which primary function is to store oxygen and facilitate its diffusion within muscle tissues. Reversibly binds oxygen through a pentacoordinated heme iron and enables its timely and efficient release as needed during periods of heightened demand. Depending on the oxidative conditions of tissues and cells, and in addition to its ability to bind oxygen, it also has a nitrite reductase activity whereby it regulates the production of bioactive nitric oxide. Under stress conditions, like hypoxia and anoxia, it also protects cells against reactive oxygen species thanks to its pseudoperoxidase activity. In Canis lupus familiaris (Dog), this protein is Myoglobin (MB).